We begin with the raw amino-acid sequence, 299 residues long: Putative adenosine/adenine deaminase (299 aa).

His-16 and His-18 together coordinate Zn(2+). 2 residues coordinate substrate: His-18 and Gly-157. His-184 serves as a coordination point for Zn(2+). The active-site Proton donor is Glu-187. Asp-265 provides a ligand contact to Zn(2+). Asp-266 contacts substrate.

Belongs to the metallo-dependent hydrolases superfamily. Adenosine and AMP deaminases family. The cofactor is Zn(2+).

In terms of biological role, putative nucleoside deaminase. May catalyze the hydrolytic deamination of adenosine or some similar substrate and play a role in purine metabolism. The polypeptide is Putative adenosine/adenine deaminase (Treponema pallidum (strain Nichols)).